A 120-amino-acid polypeptide reads, in one-letter code: uncharacterized protein (120 aa).

A helical transmembrane segment spans residues 63-83 (IDMSCVICFNFSCHLFVVIFI).

The protein localises to the membrane. This is an uncharacterized protein from Saccharomyces cerevisiae (strain ATCC 204508 / S288c) (Baker's yeast).